We begin with the raw amino-acid sequence, 356 residues long: Neutral protease 2 homolog UREG_03761 (356 aa).

The first 19 residues, 1–19 (MRFSSSFLSVLALASQALA), serve as a signal peptide directing secretion. The propeptide occupies 20–181 (FPLNDLPTTD…ALPEATLDKR (162 aa)). 2 disulfides stabilise this stretch: Cys-189-Cys-259 and Cys-266-Cys-284. His-308 serves as a coordination point for Zn(2+). Glu-309 is an active-site residue. Zn(2+)-binding residues include His-312 and Asp-323.

The protein belongs to the peptidase M35 family. It depends on Zn(2+) as a cofactor.

The protein resides in the secreted. The catalysed reaction is Preferential cleavage of bonds with hydrophobic residues in P1'. Also 3-Asn-|-Gln-4 and 8-Gly-|-Ser-9 bonds in insulin B chain.. Functionally, secreted metalloproteinase that allows assimilation of proteinaceous substrates. Shows high activities on basic nuclear substrates such as histone and protamine. This Uncinocarpus reesii (strain UAMH 1704) protein is Neutral protease 2 homolog UREG_03761.